The following is a 548-amino-acid chain: Chaperone Ric-8A (548 aa).

Disordered stretches follow at residues 443-484 (DPGH…EGMT) and 517-548 (GKMT…SDTN).

It belongs to the synembryn family.

The protein resides in the cytoplasm. It is found in the cell cortex. Functionally, chaperone that specifically binds and folds nascent G alpha proteins prior to G protein heterotrimer formation, promoting their stability and activity: folds GNAI1, GNAO1, GNA13 and GNAQ. Does not fold G(s) G-alpha proteins GNAS nor GNAL. Also acts as a guanine nucleotide exchange factor (GEF) for G alpha proteins by stimulating exchange of bound GDP for free GTP. This is Chaperone Ric-8A (ric8a) from Danio rerio (Zebrafish).